Here is a 251-residue protein sequence, read N- to C-terminus: Triosephosphate isomerase (251 aa).

Residue 12–14 (NWK) participates in substrate binding. The Electrophile role is filled by His-98. The Proton acceptor role is filled by Glu-168. Residues Gly-174, Ser-213, and 234–235 (GG) each bind substrate.

This sequence belongs to the triosephosphate isomerase family. As to quaternary structure, homodimer.

The protein resides in the cytoplasm. It carries out the reaction D-glyceraldehyde 3-phosphate = dihydroxyacetone phosphate. Its pathway is carbohydrate biosynthesis; gluconeogenesis. The protein operates within carbohydrate degradation; glycolysis; D-glyceraldehyde 3-phosphate from glycerone phosphate: step 1/1. Its function is as follows. Involved in the gluconeogenesis. Catalyzes stereospecifically the conversion of dihydroxyacetone phosphate (DHAP) to D-glyceraldehyde-3-phosphate (G3P). This is Triosephosphate isomerase from Afipia carboxidovorans (strain ATCC 49405 / DSM 1227 / KCTC 32145 / OM5) (Oligotropha carboxidovorans).